Reading from the N-terminus, the 185-residue chain is Peptidoglycan-recognition protein SC1a/b (185 aa).

Residues 1–21 form the signal peptide; that stretch reads MVSKVALLLAVLVCSQYMAQG. Residues 46 to 170 form the N-acetylmuramoyl-L-alanine amidase domain; it reads SYAIIHHTAG…RQVSATECPG (125 aa). Residue histidine 51 coordinates Zn(2+). Residues cysteine 58 and cysteine 64 are joined by a disulfide bond. Residues histidine 160 and cysteine 168 each contribute to the Zn(2+) site.

It belongs to the N-acetylmuramoyl-L-alanine amidase 2 family. Zn(2+) is required as a cofactor.

It localises to the secreted. It catalyses the reaction Hydrolyzes the link between N-acetylmuramoyl residues and L-amino acid residues in certain cell-wall glycopeptides.. Functionally, N-acetylmuramyl-L-alanine amidase involved in innate immunity by degrading bacterial peptidoglycans (PGN). Plays a scavenger role by digesting biologically active PGN into biologically inactive fragments. Has no direct bacteriolytic activity. The sequence is that of Peptidoglycan-recognition protein SC1a/b (PGRP-SC1a) from Drosophila simulans (Fruit fly).